A 227-amino-acid chain; its full sequence is Cytochrome c oxidase subunit 2 (227 aa).

The Mitochondrial intermembrane segment spans residues 1 to 14; that stretch reads MAYPFQLGFQDATS. A helical membrane pass occupies residues 15 to 45; it reads PIMEELLHFHDHTLMIVFLISSLVLYIISLM. At 46-59 the chain is on the mitochondrial matrix side; the sequence is LTTKLTHTSTMDAQ. A helical membrane pass occupies residues 60–87; that stretch reads EVETIWTILPAIILILIALPSLRILYMM. Residues 88–227 lie on the Mitochondrial intermembrane side of the membrane; the sequence is DEINNPSLTV…HFEKWSASML (140 aa). Cu cation contacts are provided by H161, C196, E198, C200, H204, and M207. Residue E198 coordinates Mg(2+).

This sequence belongs to the cytochrome c oxidase subunit 2 family. Component of the cytochrome c oxidase (complex IV, CIV), a multisubunit enzyme composed of 14 subunits. The complex is composed of a catalytic core of 3 subunits MT-CO1, MT-CO2 and MT-CO3, encoded in the mitochondrial DNA, and 11 supernumerary subunits COX4I, COX5A, COX5B, COX6A, COX6B, COX6C, COX7A, COX7B, COX7C, COX8 and NDUFA4, which are encoded in the nuclear genome. The complex exists as a monomer or a dimer and forms supercomplexes (SCs) in the inner mitochondrial membrane with NADH-ubiquinone oxidoreductase (complex I, CI) and ubiquinol-cytochrome c oxidoreductase (cytochrome b-c1 complex, complex III, CIII), resulting in different assemblies (supercomplex SCI(1)III(2)IV(1) and megacomplex MCI(2)III(2)IV(2)). Found in a complex with TMEM177, COA6, COX18, COX20, SCO1 and SCO2. Interacts with TMEM177 in a COX20-dependent manner. Interacts with COX20. Interacts with COX16. Cu cation is required as a cofactor.

The protein localises to the mitochondrion inner membrane. The catalysed reaction is 4 Fe(II)-[cytochrome c] + O2 + 8 H(+)(in) = 4 Fe(III)-[cytochrome c] + 2 H2O + 4 H(+)(out). Functionally, component of the cytochrome c oxidase, the last enzyme in the mitochondrial electron transport chain which drives oxidative phosphorylation. The respiratory chain contains 3 multisubunit complexes succinate dehydrogenase (complex II, CII), ubiquinol-cytochrome c oxidoreductase (cytochrome b-c1 complex, complex III, CIII) and cytochrome c oxidase (complex IV, CIV), that cooperate to transfer electrons derived from NADH and succinate to molecular oxygen, creating an electrochemical gradient over the inner membrane that drives transmembrane transport and the ATP synthase. Cytochrome c oxidase is the component of the respiratory chain that catalyzes the reduction of oxygen to water. Electrons originating from reduced cytochrome c in the intermembrane space (IMS) are transferred via the dinuclear copper A center (CU(A)) of subunit 2 and heme A of subunit 1 to the active site in subunit 1, a binuclear center (BNC) formed by heme A3 and copper B (CU(B)). The BNC reduces molecular oxygen to 2 water molecules using 4 electrons from cytochrome c in the IMS and 4 protons from the mitochondrial matrix. This is Cytochrome c oxidase subunit 2 (MT-CO2) from Ceratotherium simum (White rhinoceros).